We begin with the raw amino-acid sequence, 288 residues long: Pteridine reductase 1 (288 aa).

R17–S40 contributes to the NADP(+) binding site. Residue S175 coordinates substrate. Y194 functions as the Proton acceptor in the catalytic mechanism.

The protein belongs to the short-chain dehydrogenases/reductases (SDR) family. As to quaternary structure, homotetramer.

It catalyses the reaction (6R)-L-erythro-5,6,7,8-tetrahydrobiopterin + 2 NADP(+) = L-erythro-biopterin + 2 NADPH + 2 H(+). Its pathway is cofactor biosynthesis; tetrahydrobiopterin biosynthesis; tetrahydrobiopterin from biopterin: step 1/1. Its function is as follows. Exhibits a NADPH-dependent biopterin reductase activity. Has good activity with folate and significant activity with dihydrofolate and dihydrobiopterin, but not with quinonoid dihydrobiopterin. Confers resistance to methotrexate (MTX). This chain is Pteridine reductase 1 (PTR1), found in Leishmania major.